Here is a 65-residue protein sequence, read N- to C-terminus: Large ribosomal subunit protein bL35 (65 aa).

A disordered region spans residues 1–21 (MPKMKTKSGAAKRFTVRAGGT).

The protein belongs to the bacterial ribosomal protein bL35 family.

The protein is Large ribosomal subunit protein bL35 of Nitrosospira multiformis (strain ATCC 25196 / NCIMB 11849 / C 71).